Reading from the N-terminus, the 409-residue chain is Tyrosine--tRNA ligase (409 aa).

Tyr35 is a binding site for L-tyrosine. Residues 40-49 (PTGSSLHVGH) carry the 'HIGH' region motif. L-tyrosine contacts are provided by Tyr168 and Gln172. A 'KMSKS' region motif is present at residues 228–232 (KMGKT). Residue Lys231 participates in ATP binding. The region spanning 339-404 (IKVTDLFVQV…AGKKRVVRIV (66 aa)) is the S4 RNA-binding domain.

This sequence belongs to the class-I aminoacyl-tRNA synthetase family. TyrS type 1 subfamily. In terms of assembly, homodimer.

Its subcellular location is the cytoplasm. The catalysed reaction is tRNA(Tyr) + L-tyrosine + ATP = L-tyrosyl-tRNA(Tyr) + AMP + diphosphate + H(+). Its function is as follows. Catalyzes the attachment of tyrosine to tRNA(Tyr) in a two-step reaction: tyrosine is first activated by ATP to form Tyr-AMP and then transferred to the acceptor end of tRNA(Tyr). The chain is Tyrosine--tRNA ligase from Treponema pallidum (strain Nichols).